The primary structure comprises 480 residues: Probable glycine dehydrogenase (decarboxylating) subunit 2 (480 aa).

Residue Lys265 is modified to N6-(pyridoxal phosphate)lysine.

The protein belongs to the GcvP family. C-terminal subunit subfamily. The glycine cleavage system is composed of four proteins: P, T, L and H. In this organism, the P 'protein' is a heterodimer of two subunits. Pyridoxal 5'-phosphate serves as cofactor.

The enzyme catalyses N(6)-[(R)-lipoyl]-L-lysyl-[glycine-cleavage complex H protein] + glycine + H(+) = N(6)-[(R)-S(8)-aminomethyldihydrolipoyl]-L-lysyl-[glycine-cleavage complex H protein] + CO2. In terms of biological role, the glycine cleavage system catalyzes the degradation of glycine. The P protein binds the alpha-amino group of glycine through its pyridoxal phosphate cofactor; CO(2) is released and the remaining methylamine moiety is then transferred to the lipoamide cofactor of the H protein. The sequence is that of Probable glycine dehydrogenase (decarboxylating) subunit 2 from Thermosipho africanus (strain TCF52B).